Consider the following 70-residue polypeptide: MPREIKDIKDFLLKARRKDAKSVKIKKNPENVKFKVRCSRFLYTLVITDKEKAEKLKQSLPPGLQVKEVK.

The protein belongs to the eukaryotic ribosomal protein eL38 family.

This chain is Large ribosomal subunit protein eL38 (RpL38), found in Plutella xylostella (Diamondback moth).